A 948-amino-acid chain; its full sequence is RNA polymerase-associated protein RapA (948 aa).

In terms of domain architecture, Helicase ATP-binding spans 164–332; sequence EVADRSAPRV…FARLRLLDPN (169 aa). 177–184 contributes to the ATP binding site; that stretch reads DEVGLGKT. The DEAH box signature appears at 278 to 281; it reads DEAH. Positions 473-627 constitute a Helicase C-terminal domain; that stretch reads RVDWLIDTLK…TCPTGNALQH (155 aa).

Belongs to the SNF2/RAD54 helicase family. RapA subfamily. As to quaternary structure, interacts with the RNAP. Has a higher affinity for the core RNAP than for the holoenzyme. Its ATPase activity is stimulated by binding to RNAP.

Transcription regulator that activates transcription by stimulating RNA polymerase (RNAP) recycling in case of stress conditions such as supercoiled DNA or high salt concentrations. Probably acts by releasing the RNAP, when it is trapped or immobilized on tightly supercoiled DNA. Does not activate transcription on linear DNA. Probably not involved in DNA repair. This Pseudomonas putida (strain W619) protein is RNA polymerase-associated protein RapA.